A 208-amino-acid polypeptide reads, in one-letter code: uncharacterized protein (208 aa).

A J domain is found at 4–71 (DYYAILNITP…SRRAQYDRES (68 aa)). The segment at 67–100 (YDRESASSSAKPRQSFFSRTNPQPQSQSQQGGPS) is disordered. Positions 72–87 (ASSSAKPRQSFFSRTN) are enriched in polar residues. Residues 88-100 (PQPQSQSQQGGPS) are compositionally biased toward low complexity. Residues 127–147 (GIANAFWTIVGTLAGAALGFI) form a helical membrane-spanning segment.

This sequence belongs to the DnaJ family.

The protein resides in the endoplasmic reticulum membrane. This is an uncharacterized protein from Schizosaccharomyces pombe (strain 972 / ATCC 24843) (Fission yeast).